We begin with the raw amino-acid sequence, 301 residues long: Nucleosome assembly protein 1;3 (301 aa).

The stretch at 15–69 (VETLKNKLQALAEQHVDVLESLAPVVRKRVDVLIEIQSQHDELEAKFLEEKSALE) forms a coiled coil. Positions 36 to 51 (LAPVVRKRVDVLIEIQ) match the Nuclear export signal motif. Positions 279–301 (EDYGASWVDDEEDDDDEYSDEEA) are disordered. Serine 297 carries the post-translational modification Phosphoserine; by CK2.

It belongs to the nucleosome assembly protein (NAP) family.

The protein resides in the nucleus. Its subcellular location is the cytoplasm. Functionally, may modulate chromatin structure by regulation of nucleosome assembly/disassembly. The chain is Nucleosome assembly protein 1;3 (NAP1;3) from Oryza sativa subsp. indica (Rice).